Consider the following 150-residue polypeptide: D-aminoacyl-tRNA deacylase (150 aa).

A Gly-cisPro motif, important for rejection of L-amino acids motif is present at residues Gly-136–Pro-137.

Belongs to the DTD family. Homodimer.

It is found in the cytoplasm. The enzyme catalyses glycyl-tRNA(Ala) + H2O = tRNA(Ala) + glycine + H(+). It catalyses the reaction a D-aminoacyl-tRNA + H2O = a tRNA + a D-alpha-amino acid + H(+). An aminoacyl-tRNA editing enzyme that deacylates mischarged D-aminoacyl-tRNAs. Also deacylates mischarged glycyl-tRNA(Ala), protecting cells against glycine mischarging by AlaRS. Acts via tRNA-based rather than protein-based catalysis; rejects L-amino acids rather than detecting D-amino acids in the active site. By recycling D-aminoacyl-tRNA to D-amino acids and free tRNA molecules, this enzyme counteracts the toxicity associated with the formation of D-aminoacyl-tRNA entities in vivo and helps enforce protein L-homochirality. This is D-aminoacyl-tRNA deacylase from Staphylococcus aureus (strain Mu50 / ATCC 700699).